A 1125-amino-acid polypeptide reads, in one-letter code: Kinase and exchange factor for Rac B (1125 aa).

Disordered regions lie at residues Val50–Asn175, Ser247–Phe287, and Lys322–Asp362. The segment covering Asn59 to Asn91 has biased composition (low complexity). Residues Ser92–Phe106 are compositionally biased toward polar residues. Positions Thr113 to Pro124 are enriched in pro residues. A compositionally biased stretch (low complexity) spans Asn137–Lys161. Residues Lys380–Lys571 form the DH domain. In terms of domain architecture, PH spans Arg601–Ile822. Disordered stretches follow at residues Ile693–Asn729 and Ser761–Gly791. Residues Asn694 to Asn729 show a composition bias toward low complexity. The region spanning Ile848 to Leu1117 is the Protein kinase domain. ATP contacts are provided by residues Ile854–Thr862 and Lys876. Catalysis depends on Asp971, which acts as the Proton acceptor.

This sequence belongs to the protein kinase superfamily. STE Ser/Thr protein kinase family. Mg(2+) serves as cofactor.

The catalysed reaction is L-seryl-[protein] + ATP = O-phospho-L-seryl-[protein] + ADP + H(+). The enzyme catalyses L-threonyl-[protein] + ATP = O-phospho-L-threonyl-[protein] + ADP + H(+). The sequence is that of Kinase and exchange factor for Rac B from Dictyostelium discoideum (Social amoeba).